We begin with the raw amino-acid sequence, 504 residues long: Histidine ammonia-lyase (504 aa).

Residues Ala142–Gly144 constitute a cross-link (5-imidazolinone (Ala-Gly)). 2,3-didehydroalanine (Ser) is present on Ser143.

The protein belongs to the PAL/histidase family. In terms of processing, contains an active site 4-methylidene-imidazol-5-one (MIO), which is formed autocatalytically by cyclization and dehydration of residues Ala-Ser-Gly.

It is found in the cytoplasm. It catalyses the reaction L-histidine = trans-urocanate + NH4(+). The protein operates within amino-acid degradation; L-histidine degradation into L-glutamate; N-formimidoyl-L-glutamate from L-histidine: step 1/3. The protein is Histidine ammonia-lyase of Staphylococcus aureus (strain JH1).